The chain runs to 174 residues: Co-chaperone protein HscB (174 aa).

The 73-residue stretch at 2–74 (NYFTLFDLPR…LNRAIYFLCL (73 aa)) folds into the J domain.

It belongs to the HscB family. Interacts with HscA and stimulates its ATPase activity. Interacts with IscU.

Co-chaperone involved in the maturation of iron-sulfur cluster-containing proteins. Seems to help targeting proteins to be folded toward HscA. The chain is Co-chaperone protein HscB from Buchnera aphidicola subsp. Acyrthosiphon pisum (strain Tuc7).